The chain runs to 55 residues: Large ribosomal subunit protein bL33 (55 aa).

It belongs to the bacterial ribosomal protein bL33 family.

The protein is Large ribosomal subunit protein bL33 of Phenylobacterium zucineum (strain HLK1).